The following is an 883-amino-acid chain: Phosphoenolpyruvate carboxylase (883 aa).

Catalysis depends on residues histidine 138 and lysine 546.

Belongs to the PEPCase type 1 family. The cofactor is Mg(2+).

It catalyses the reaction oxaloacetate + phosphate = phosphoenolpyruvate + hydrogencarbonate. In terms of biological role, forms oxaloacetate, a four-carbon dicarboxylic acid source for the tricarboxylic acid cycle. The sequence is that of Phosphoenolpyruvate carboxylase from Salmonella paratyphi A (strain ATCC 9150 / SARB42).